The primary structure comprises 451 residues: Penicillin-binding protein 4* (451 aa).

Catalysis depends on serine 61, which acts as the Acyl-ester intermediate.

This sequence belongs to the beta-lactamase family.

It is found in the forespore outer membrane. The protein operates within cell wall biogenesis; peptidoglycan biosynthesis. In terms of biological role, probably involved in peptidoglycan modification during cortex synthesis. This chain is Penicillin-binding protein 4* (pbpE), found in Bacillus subtilis (strain 168).